A 692-amino-acid chain; its full sequence is Transforming growth factor beta activator LRRC33 (692 aa).

A signal peptide spans 1 to 18 (MELLPLWLCLGFHFLTVG). Residues 19-650 (WRNRSGTATA…CKWERLDLGL (632 aa)) lie on the Extracellular side of the membrane. A glycan (N-linked (GlcNAc...) asparagine) is linked at asparagine 21. An LRRNT domain is found at 29–56 (ASQGVCKLVGGAADCRGQSLASVPSSLP). 10 LRR repeats span residues 58 to 79 (HARM…SLQP), 82 to 103 (LLES…AFQE), 106 to 127 (HLRS…TAAA), 133 to 155 (GLRR…MLQN), 158 to 179 (SLRS…VFEG), 182 to 203 (RLRE…AFDG), 206 to 227 (ELRH…GLTR), 228 to 239 (LRVLNVSYNVLE), 251 to 272 (ELET…PQYS), and 273 to 294 (KLRT…YNTS). An N-linked (GlcNAc...) asparagine glycan is attached at asparagine 74. N-linked (GlcNAc...) asparagine glycosylation is present at asparagine 155. N-linked (GlcNAc...) asparagine glycosylation occurs at asparagine 232. 3 N-linked (GlcNAc...) asparagine glycosylation sites follow: asparagine 292, asparagine 309, and asparagine 312. 11 LRR repeats span residues 329 to 350 (DLRF…FLRK), 353 to 374 (SLSH…EHEP), 377 to 398 (ALTE…PGLA), 403 to 424 (SLRL…LFAN), 427 to 447 (NITT…PAAS), 463 to 484 (SLRS…PFQG), 486 to 507 (SLTY…APLQ), 512 to 534 (MLQV…DFSG), 537 to 558 (NLRD…GGSL), 559 to 580 (ALET…AVSE), and 585 to 594 (GLRTIYLSQN). N-linked (GlcNAc...) asparagine glycans are attached at residues asparagine 408 and asparagine 427. Asparagine 500 carries an N-linked (GlcNAc...) asparagine glycan. In terms of domain architecture, LRRCT spans 595-643 (PYDCCGVDGWGALQHGQTVADWAMVTCNLSSKIIRVTELPGGVPRDCKW). Residue asparagine 622 is glycosylated (N-linked (GlcNAc...) asparagine). A helical transmembrane segment spans residues 651 to 671 (LYLVLILPSCLTLLVACTVIV). Topologically, residues 672–692 (LTFKKPLLQVIKSRCHWSSVY) are cytoplasmic.

It belongs to the LRRC32/LRRC33 family. Interacts with TGFB1; associates via disulfide bonds with the Latency-associated peptide chain (LAP) regulatory chain of TGFB1, leading to regulate activation of TGF-beta-1. Interacts (via LRR repeats) with TLR2, TLR3, TLR4, TLR9 and probably other Toll-like receptors. Interacts with CYBB/NOX2; the interaction is direct. Mainly expressed in cells of hematopoietic origin. Highly expressed in bone marrow, thymus, liver, lung, intestine and spleen. In the brain, highly expressed in microglia.

It localises to the cell membrane. Its subcellular location is the endoplasmic reticulum membrane. In terms of biological role, key regulator of transforming growth factor beta-1 (TGFB1) specifically required for microglia function in the nervous system. Required for activation of latent TGF-beta-1 in macrophages and microglia: associates specifically via disulfide bonds with the Latency-associated peptide (LAP), which is the regulatory chain of TGFB1, and regulates integrin-dependent activation of TGF-beta-1. TGF-beta-1 activation mediated by LRRC33/NRROS is highly localized: there is little spreading of TGF-beta-1 activated from one microglial cell to neighboring microglia, suggesting the existence of localized and selective activation of TGF-beta-1 by LRRC33/NRROS. Indirectly plays a role in Toll-like receptor (TLR) signaling: ability to inhibit TLR-mediated NF-kappa-B activation and cytokine production is probably a consequence of its role in TGF-beta-1 signaling. The protein is Transforming growth factor beta activator LRRC33 of Homo sapiens (Human).